Consider the following 213-residue polypeptide: Ribosomal RNA small subunit methyltransferase G (213 aa).

S-adenosyl-L-methionine-binding positions include Gly72, Phe77, 125 to 126, and Arg141; that span reads IE.

It belongs to the methyltransferase superfamily. RNA methyltransferase RsmG family.

The protein resides in the cytoplasm. It catalyses the reaction guanosine(527) in 16S rRNA + S-adenosyl-L-methionine = N(7)-methylguanosine(527) in 16S rRNA + S-adenosyl-L-homocysteine. Functionally, specifically methylates the N7 position of guanine in position 527 of 16S rRNA. This Rhizobium meliloti (strain 1021) (Ensifer meliloti) protein is Ribosomal RNA small subunit methyltransferase G.